We begin with the raw amino-acid sequence, 106 residues long: Large ribosomal subunit protein P2A (106 aa).

Lys2 participates in a covalent cross-link: Glycyl lysine isopeptide (Lys-Gly) (interchain with G-Cter in ubiquitin). Thr16 carries the post-translational modification Phosphothreonine. Phosphoserine occurs at positions 40 and 43. Lys48 is covalently cross-linked (Glycyl lysine isopeptide (Lys-Gly) (interchain with G-Cter in ubiquitin)). Ser49 carries the phosphoserine modification. Over residues 65 to 82 (PAAGPASAGGAAAASGDA) the composition is skewed to low complexity. Residues 65 to 106 (PAAGPASAGGAAAASGDAAAEEEKEEEAAEESDDDMGFGLFD) form a disordered region. The segment covering 83 to 100 (AAEEEKEEEAAEESDDDM) has biased composition (acidic residues). At Ser96 the chain carries Phosphoserine.

This sequence belongs to the eukaryotic ribosomal protein P1/P2 family. In terms of assembly, component of the large ribosomal subunit (LSU). Mature yeast ribosomes consist of a small (40S) and a large (60S) subunit. The 40S small subunit contains 1 molecule of ribosomal RNA (18S rRNA) and 33 different proteins (encoded by 57 genes). The large 60S subunit contains 3 rRNA molecules (25S, 5.8S and 5S rRNA) and 46 different proteins (encoded by 81 genes). The 5 acidic ribosomal P-proteins form the stalk structure of the 60S subunit. They are organized as a pentameric complex in which uL10/P0 interacts with 2 heterodimers, P1A-P2B and P1B-P2A. In terms of processing, phosphorylation is not involved in the interaction of the acidic P proteins with the ribosome, however it is suggested to affect the ribosome activity and to participate in a possible ribosome regulatory mechanism. The N-terminus is not modified.

It localises to the cytoplasm. Its function is as follows. Component of the ribosome, a large ribonucleoprotein complex responsible for the synthesis of proteins in the cell. The small ribosomal subunit (SSU) binds messenger RNAs (mRNAs) and translates the encoded message by selecting cognate aminoacyl-transfer RNA (tRNA) molecules. The large subunit (LSU) contains the ribosomal catalytic site termed the peptidyl transferase center (PTC), which catalyzes the formation of peptide bonds, thereby polymerizing the amino acids delivered by tRNAs into a polypeptide chain. The nascent polypeptides leave the ribosome through a tunnel in the LSU and interact with protein factors that function in enzymatic processing, targeting, and the membrane insertion of nascent chains at the exit of the ribosomal tunnel. The sequence is that of Large ribosomal subunit protein P2A from Saccharomyces cerevisiae (strain ATCC 204508 / S288c) (Baker's yeast).